Reading from the N-terminus, the 747-residue chain is Endopolyphosphatase (747 aa).

M1 is a topological domain (cytoplasmic). A helical; Signal-anchor for type II membrane protein membrane pass occupies residues 2–22 (LPKTLTIWASLASLAVAQSGQ). The Vacuolar segment spans residues 23–747 (VVFAKNADGK…AEYLEEPDDD (725 aa)). 3 N-linked (GlcNAc...) asparagine glycosylation sites follow: N134, N191, and N463. The disordered stretch occupies residues 570–640 (AVATSSEPES…PKFPKDLQPG (71 aa)). Residues 577 to 586 (PESDDYDSDL) are compositionally biased toward acidic residues. Positions 591–625 (KKGKKKGKKGKKGKKGKKGKKKKGKKGKKGKKGKR) are enriched in basic residues. A compositionally biased stretch (basic and acidic residues) spans 626–635 (DKSMPPKFPK). Residue N659 is glycosylated (N-linked (GlcNAc...) asparagine).

This sequence belongs to the endopolyphosphatase PPN1 family. The cofactor is a divalent metal cation. Processing by proteases in the vacuole may be required for activation.

The protein resides in the vacuole membrane. The enzyme catalyses [phosphate](n+1) + n H2O = (n+1) phosphate + n H(+). Its function is as follows. Catalyzes the hydrolysis of inorganic polyphosphate (polyP) chains of many hundreds of phosphate residues into shorter lengths. The protein is Endopolyphosphatase (PPN1) of Yarrowia lipolytica (strain CLIB 122 / E 150) (Yeast).